Here is a 449-residue protein sequence, read N- to C-terminus: Serine/threonine-protein phosphatase 2A activator 2 (449 aa).

2 disordered regions span residues 1–72 and 378–416; these read MDSS…DPST and MSEQ…PTGW. The span at 54–69 shows a compositional bias: pro residues; that stretch reads NPTPVPETPALPPRPD. Over residues 389–403 the composition is skewed to acidic residues; it reads EENEEEGGEVEVYDD.

The protein belongs to the PTPA-type PPIase family.

The protein localises to the cytoplasm. It catalyses the reaction [protein]-peptidylproline (omega=180) = [protein]-peptidylproline (omega=0). In terms of biological role, PPIases accelerate the folding of proteins. It catalyzes the cis-trans isomerization of proline imidic peptide bonds in oligopeptides. Acts as a regulatory subunit for PP2A-like phosphatases modulating their activity or substrate specificity, probably by inducing a conformational change in the catalytic subunit, a direct target of the PPIase. Can reactivate inactive phosphatase PP2A-phosphatase methylesterase complexes (PP2Ai) in presence of ATP and Mg(2+) by dissociating the inactive form from the complex. This is Serine/threonine-protein phosphatase 2A activator 2 (rrd-2) from Neurospora crassa (strain ATCC 24698 / 74-OR23-1A / CBS 708.71 / DSM 1257 / FGSC 987).